Reading from the N-terminus, the 341-residue chain is C2 calcium-dependent domain-containing protein 4D (341 aa).

A compositionally biased stretch (basic and acidic residues) spans 56 to 71 (RLRDPRGAEGRVDRNP). Disordered stretches follow at residues 56-75 (RLRDPRGAEGRVDRNPGGRN) and 134-176 (CRAP…PYAP). Residues 139-149 (SDTASSPDSSP) are compositionally biased toward low complexity. Residues 205–331 (RGGQLRLSTE…PPLAGGLGPG (127 aa)) form the C2 domain.

The sequence is that of C2 calcium-dependent domain-containing protein 4D (C2cd4d) from Mus musculus (Mouse).